A 736-amino-acid chain; its full sequence is 1,4-alpha-glucan branching enzyme GlgB (736 aa).

The active-site Nucleophile is Asp-415. Residue Glu-470 is the Proton donor of the active site.

This sequence belongs to the glycosyl hydrolase 13 family. GlgB subfamily. Monomer.

It carries out the reaction Transfers a segment of a (1-&gt;4)-alpha-D-glucan chain to a primary hydroxy group in a similar glucan chain.. It participates in glycan biosynthesis; glycogen biosynthesis. Functionally, catalyzes the formation of the alpha-1,6-glucosidic linkages in glycogen by scission of a 1,4-alpha-linked oligosaccharide from growing alpha-1,4-glucan chains and the subsequent attachment of the oligosaccharide to the alpha-1,6 position. This Paraburkholderia xenovorans (strain LB400) protein is 1,4-alpha-glucan branching enzyme GlgB.